A 450-amino-acid polypeptide reads, in one-letter code: Phosphoglucosamine mutase (450 aa).

Residue serine 101 is the Phosphoserine intermediate of the active site. Residues serine 101, aspartate 240, aspartate 242, and aspartate 244 each contribute to the Mg(2+) site. Phosphoserine is present on serine 101.

The protein belongs to the phosphohexose mutase family. Requires Mg(2+) as cofactor. In terms of processing, activated by phosphorylation.

The catalysed reaction is alpha-D-glucosamine 1-phosphate = D-glucosamine 6-phosphate. In terms of biological role, catalyzes the conversion of glucosamine-6-phosphate to glucosamine-1-phosphate. The protein is Phosphoglucosamine mutase of Streptococcus pneumoniae (strain JJA).